A 165-amino-acid polypeptide reads, in one-letter code: Protein SprT (165 aa).

In terms of domain architecture, SprT-like spans 20 to 162; sequence EKLAQANLKL…YRCVHCGEQL (143 aa). H78 is a Zn(2+) binding site. The active site involves E79. Residue H82 coordinates Zn(2+).

This sequence belongs to the SprT family. Zn(2+) serves as cofactor.

The protein localises to the cytoplasm. The protein is Protein SprT of Escherichia coli (strain SMS-3-5 / SECEC).